Here is a 274-residue protein sequence, read N- to C-terminus: Fatty-acid O-methyltransferase (274 aa).

Belongs to the methyltransferase superfamily.

The catalysed reaction is a fatty acid + S-adenosyl-L-methionine = a fatty acid methyl ester + S-adenosyl-L-homocysteine. Functionally, O-methyltransferase that modifies the hydroxy group of the fatty acids. Oleate is the most effective fatty acid acceptor. The protein is Fatty-acid O-methyltransferase (mtf2) of Mycolicibacterium smegmatis (strain ATCC 700084 / mc(2)155) (Mycobacterium smegmatis).